The chain runs to 228 residues: 2-C-methyl-D-erythritol 4-phosphate cytidylyltransferase (228 aa).

The protein belongs to the IspD/TarI cytidylyltransferase family. IspD subfamily.

It catalyses the reaction 2-C-methyl-D-erythritol 4-phosphate + CTP + H(+) = 4-CDP-2-C-methyl-D-erythritol + diphosphate. The protein operates within isoprenoid biosynthesis; isopentenyl diphosphate biosynthesis via DXP pathway; isopentenyl diphosphate from 1-deoxy-D-xylulose 5-phosphate: step 2/6. Its function is as follows. Catalyzes the formation of 4-diphosphocytidyl-2-C-methyl-D-erythritol from CTP and 2-C-methyl-D-erythritol 4-phosphate (MEP). The sequence is that of 2-C-methyl-D-erythritol 4-phosphate cytidylyltransferase from Actinobacillus pleuropneumoniae serotype 3 (strain JL03).